A 152-amino-acid polypeptide reads, in one-letter code: Arginine repressor (152 aa).

It belongs to the ArgR family.

It localises to the cytoplasm. It functions in the pathway amino-acid biosynthesis; L-arginine biosynthesis [regulation]. Functionally, regulates arginine biosynthesis genes. The chain is Arginine repressor from Lactiplantibacillus plantarum (strain ATCC BAA-793 / NCIMB 8826 / WCFS1) (Lactobacillus plantarum).